A 304-amino-acid polypeptide reads, in one-letter code: Beta-lactamase AER-1 (304 aa).

The signal sequence occupies residues M1 to A37. S83 acts as the Acyl-ester intermediate in catalysis. A disulfide bridge links C90 with C137. A disordered region spans residues E173–T195. K248–G250 contributes to the substrate binding site.

It belongs to the class-A beta-lactamase family.

The enzyme catalyses a beta-lactam + H2O = a substituted beta-amino acid. Its function is as follows. Hydrolyzes carbenicillin. Methicillin and oxacillin are weakly hydrolyzed. The sequence is that of Beta-lactamase AER-1 (aer1) from Aeromonas hydrophila.